We begin with the raw amino-acid sequence, 241 residues long: MNPEQFQQALADHGITLSAEQMQQFADYYQLLVETNEHVNLTRITEKNEVYLKHFYDSITGAFAEPRLESEDLTLCDIGAGAGFPSLPLKIAFPQLKVTIVDSLNKRIAFLEDLVAKLGLTGVTLIHDRAETFSAKTSPYREKFDIVTARAVARLSVLSELCLPAAKVGGEFIAYKASAAPEELQQGGTAIKQLGGKVQKTVTLTLPGTDEERNIIVIDKIKATPKKYPRRPGLPSKKPIQ.

S-adenosyl-L-methionine-binding positions include glycine 79, phenylalanine 84, 130 to 131 (AE), and arginine 150.

The protein belongs to the methyltransferase superfamily. RNA methyltransferase RsmG family.

The protein localises to the cytoplasm. Functionally, specifically methylates the N7 position of a guanine in 16S rRNA. The polypeptide is Ribosomal RNA small subunit methyltransferase G (Limosilactobacillus reuteri (strain DSM 20016) (Lactobacillus reuteri)).